We begin with the raw amino-acid sequence, 222 residues long: Iron-sulfur cluster repair protein YtfE (222 aa).

Belongs to the RIC family. YtfE subfamily. As to quaternary structure, homodimer.

It is found in the cytoplasm. In terms of biological role, di-iron-containing protein involved in the repair of iron-sulfur clusters damaged by oxidative and nitrosative stress conditions. The chain is Iron-sulfur cluster repair protein YtfE from Musicola paradisiaca (strain Ech703) (Dickeya paradisiaca).